The sequence spans 99 residues: Integration host factor subunit alpha (99 aa).

This sequence belongs to the bacterial histone-like protein family. In terms of assembly, heterodimer of an alpha and a beta chain.

Its function is as follows. This protein is one of the two subunits of integration host factor, a specific DNA-binding protein that functions in genetic recombination as well as in transcriptional and translational control. In Xylella fastidiosa (strain M12), this protein is Integration host factor subunit alpha.